The following is a 113-amino-acid chain: MHTSELLKHIYDINLSYLLLAQRLIVQDKASAMFRLGINEEMANTLGALTLPQMVKLAETNQLVCHFRFDDHQTITRLTQDSRVDDLQQIHTGIMLSTRLLNEVDDTARKKRA.

It belongs to the FlhD family. As to quaternary structure, homodimer; disulfide-linked. Forms a heterohexamer composed of two FlhC and four FlhD subunits. Each FlhC binds a FlhD dimer, forming a heterotrimer, and a hexamer assembles by dimerization of two heterotrimers.

The protein localises to the cytoplasm. In terms of biological role, functions in complex with FlhC as a master transcriptional regulator that regulates transcription of several flagellar and non-flagellar operons by binding to their promoter region. Activates expression of class 2 flagellar genes, including fliA, which is a flagellum-specific sigma factor that turns on the class 3 genes. Also regulates genes whose products function in a variety of physiological pathways. This chain is Flagellar transcriptional regulator FlhD, found in Salmonella typhi.